The following is a 343-amino-acid chain: Ribosomal RNA small subunit methyltransferase C (343 aa).

This sequence belongs to the methyltransferase superfamily. RsmC family. In terms of assembly, monomer.

The protein resides in the cytoplasm. The catalysed reaction is guanosine(1207) in 16S rRNA + S-adenosyl-L-methionine = N(2)-methylguanosine(1207) in 16S rRNA + S-adenosyl-L-homocysteine + H(+). Specifically methylates the guanine in position 1207 of 16S rRNA in the 30S particle. The protein is Ribosomal RNA small subunit methyltransferase C of Escherichia fergusonii (strain ATCC 35469 / DSM 13698 / CCUG 18766 / IAM 14443 / JCM 21226 / LMG 7866 / NBRC 102419 / NCTC 12128 / CDC 0568-73).